The following is a 194-amino-acid chain: Peptidyl-tRNA hydrolase (194 aa).

Y17 serves as a coordination point for tRNA. The active-site Proton acceptor is H22. The tRNA site is built by Y69, N71, and N117.

The protein belongs to the PTH family. In terms of assembly, monomer.

It is found in the cytoplasm. The enzyme catalyses an N-acyl-L-alpha-aminoacyl-tRNA + H2O = an N-acyl-L-amino acid + a tRNA + H(+). Functionally, hydrolyzes ribosome-free peptidyl-tRNAs (with 1 or more amino acids incorporated), which drop off the ribosome during protein synthesis, or as a result of ribosome stalling. Its function is as follows. Catalyzes the release of premature peptidyl moieties from peptidyl-tRNA molecules trapped in stalled 50S ribosomal subunits, and thus maintains levels of free tRNAs and 50S ribosomes. In Paenarthrobacter aurescens (strain TC1), this protein is Peptidyl-tRNA hydrolase.